The sequence spans 300 residues: MSAINTLPPIKSIFNDFKEITKAGLAISVVFSSLAGYLLGIHEFNLETIYVLLMLAIGGYCMVGASNAYNQIIEKDLDTLMNRTKNRPIPSGRMSVNTAFTIATILTITGLTILYMINPKTAMFGAISIFLYTCVYTPLKTVTSLSVFVGAFPGAIPFMLGWVAATNDFGIEAGTLFLIQFFWQFPHFWAIGWFLFEDYKKGGFYMLPTGKRDKGTAMQIVLYTLWLTAASILPSFGYTGRLYLTPVSAIIVVLLGLWMLVYAIKLYKNKTDKSAKTLMLVSVAYISLIQVVYILDKFLR.

Transmembrane regions (helical) follow at residues 24-44, 46-66, 99-119, 122-142, 145-165, 176-196, 220-240, 244-264, and 275-295; these read GLAISVVFSSLAGYLLGIHEF, LETIYVLLMLAIGGYCMVGAS, AFTIATILTITGLTILYMINP, AMFGAISIFLYTCVYTPLKTV, LSVFVGAFPGAIPFMLGWVAA, LFLIQFFWQFPHFWAIGWFLF, IVLYTLWLTAASILPSFGYTG, LTPVSAIIVVLLGLWMLVYAI, and AKTLMLVSVAYISLIQVVYIL.

It belongs to the UbiA prenyltransferase family. Protoheme IX farnesyltransferase subfamily.

The protein localises to the cell inner membrane. The catalysed reaction is heme b + (2E,6E)-farnesyl diphosphate + H2O = Fe(II)-heme o + diphosphate. The protein operates within porphyrin-containing compound metabolism; heme O biosynthesis; heme O from protoheme: step 1/1. In terms of biological role, converts heme B (protoheme IX) to heme O by substitution of the vinyl group on carbon 2 of heme B porphyrin ring with a hydroxyethyl farnesyl side group. The chain is Protoheme IX farnesyltransferase from Flavobacterium psychrophilum (strain ATCC 49511 / DSM 21280 / CIP 103535 / JIP02/86).